A 73-amino-acid chain; its full sequence is N-terminal-borealin-like protein (73 aa).

Belongs to the borealin family. Component of the aurora kinase complex composed of at least BIR1, BNL1, IPL1 and SLI15.

The protein resides in the nucleus. It is found in the cytoplasm. It localises to the cytoskeleton. Its subcellular location is the spindle. Functionally, component of the aurora kinase complex, also called chromosomal passenger complex (CPC), essential for chromosome segregation and metaphase chromosome alignment. Mediates the SLI15-BIR1 interaction within the CPC. The protein is N-terminal-borealin-like protein (NBL1) of Saccharomyces cerevisiae (strain ATCC 204508 / S288c) (Baker's yeast).